The sequence spans 438 residues: Innexin inx7 (438 aa).

Topologically, residues methionine 1 to asparagine 23 are cytoplasmic. A helical membrane pass occupies residues isoleucine 24–isoleucine 44. At threonine 45–serine 58 the chain is on the extracellular side. The chain crosses the membrane as a helical span at residues aspartate 59–valine 79. Residues arginine 80–tyrosine 112 are Cytoplasmic-facing. The chain crosses the membrane as a helical span at residues glutamine 113 to tryptophan 133. Over lysine 134–lysine 283 the chain is Extracellular. A helical membrane pass occupies residues isoleucine 284–leucine 304. Residues tryptophan 305–valine 438 lie on the Cytoplasmic side of the membrane. Disordered stretches follow at residues asparagine 381–serine 402 and arginine 415–valine 438. Low complexity predominate over residues glycine 418–serine 431.

It belongs to the pannexin family. In terms of tissue distribution, expressed around gut lobes in embryonic stages 15-17.

The protein resides in the cell membrane. The protein localises to the cell junction. Its subcellular location is the gap junction. Structural components of the gap junctions. The polypeptide is Innexin inx7 (Inx7) (Drosophila melanogaster (Fruit fly)).